We begin with the raw amino-acid sequence, 545 residues long: Germacrene D synthase 1 (545 aa).

Positions 298, 302, 443, and 451 each coordinate Mg(2+). The DDXXD motif motif lies at 298–302 (DDTFD).

This sequence belongs to the terpene synthase family. Requires Mg(2+) as cofactor.

It localises to the cytoplasm. Its subcellular location is the cytosol. It catalyses the reaction (2E,6E)-farnesyl diphosphate = (-)-germacrene D + diphosphate. It participates in secondary metabolite biosynthesis; terpenoid biosynthesis. In terms of biological role, sesquiterpene synthase involved in germacrene D biosynthesis. Also produces at least 13 additional sesquiterpene products, including germacrene C and (+)-germacrene A, beta-ylangene, (E)-beta-farnesene and (E,E)-alpha-farnesene. In Pogostemon cablin (Patchouli), this protein is Germacrene D synthase 1.